The chain runs to 238 residues: MGKRLISQNRGRGTPTYRAPSHKYKADLRHPRVDENTSLQGEVIDIEHDPARSAPIAKVAFENGEELFLLASEGVAVGNIIECGDDAEVKPGNIVPIGNVPEGFFICNIESKPNDGGKFVRSSGVYATVVTHEPTRTAVSMPSGNIKWLNPKCRAVVGIVAGGGRVDRPWLKAGKKYHKMKTRAAKYPRVSAVAMNPRDHPFGGGAWKHPGKPTTVSRNAPPGRKVGLIAARRTGMKR.

Positions 1–11 are enriched in polar residues; it reads MGKRLISQNRG. Disordered regions lie at residues 1–22 and 202–223; these read MGKR…APSH and FGGG…APPG.

Belongs to the universal ribosomal protein uL2 family. As to quaternary structure, part of the 50S ribosomal subunit. Forms a bridge to the 30S subunit in the 70S ribosome.

Its function is as follows. One of the primary rRNA binding proteins. Required for association of the 30S and 50S subunits to form the 70S ribosome, for tRNA binding and peptide bond formation. It has been suggested to have peptidyltransferase activity; this is somewhat controversial. Makes several contacts with the 16S rRNA in the 70S ribosome. This chain is Large ribosomal subunit protein uL2, found in Methanosarcina mazei (strain ATCC BAA-159 / DSM 3647 / Goe1 / Go1 / JCM 11833 / OCM 88) (Methanosarcina frisia).